Consider the following 1019-residue polypeptide: Insulin-degrading enzyme (1019 aa).

His-108 contacts Zn(2+). Glu-111 functions as the Proton acceptor in the catalytic mechanism. 2 residues coordinate Zn(2+): His-112 and Glu-189. The residue at position 192 (Lys-192) is an N6-succinyllysine. Position 359-363 (359-363 (LVGGQ)) interacts with substrate. Arg-429 provides a ligand contact to ATP. The residue at position 697 (Lys-697) is an N6-succinyllysine. A SlyX motif motif is present at residues 853–858 (EKPPHY). Residue 895–901 (DKPKKLS) participates in ATP binding.

Belongs to the peptidase M16 family. As to quaternary structure, homodimer. Can also form homotetramers. It depends on Zn(2+) as a cofactor. As to expression, detected in brain and liver (at protein level). Detected in liver.

The protein resides in the cytoplasm. Its subcellular location is the cytosol. It localises to the cell membrane. It is found in the secreted. The catalysed reaction is Degradation of insulin, glucagon and other polypeptides. No action on proteins.. Activated by ATP, other nucleotide triphosphates and small peptides. Inhibited by bacitracin. Its function is as follows. Plays a role in the cellular breakdown of insulin, APP peptides, IAPP peptides, natriuretic peptides, glucagon, bradykinin, kallidin, and other peptides, and thereby plays a role in intercellular peptide signaling. Substrate binding induces important conformation changes, making it possible to bind and degrade larger substrates, such as insulin. Contributes to the regulation of peptide hormone signaling cascades and regulation of blood glucose homeostasis via its role in the degradation of insulin, glucagon and IAPP. Plays a role in the degradation and clearance of APP-derived amyloidogenic peptides that are secreted by neurons and microglia. Degrades the natriuretic peptides ANP, BNP and CNP, inactivating their ability to raise intracellular cGMP. Also degrades an aberrant frameshifted 40-residue form of NPPA (fsNPPA) which is associated with familial atrial fibrillation in heterozygous patients. Involved in antigen processing. Produces both the N terminus and the C terminus of MAGEA3-derived antigenic peptide (EVDPIGHLY) that is presented to cytotoxic T lymphocytes by MHC class I. The chain is Insulin-degrading enzyme (Ide) from Mus musculus (Mouse).